The following is a 1391-amino-acid chain: DNA-directed RNA polymerase subunit beta' (1391 aa).

4 residues coordinate Zn(2+): C70, C72, C85, and C88. Mg(2+)-binding residues include D461, D463, and D465. Zn(2+) is bound by residues C809, C882, C889, and C892.

This sequence belongs to the RNA polymerase beta' chain family. In terms of assembly, the RNAP catalytic core consists of 2 alpha, 1 beta, 1 beta' and 1 omega subunit. When a sigma factor is associated with the core the holoenzyme is formed, which can initiate transcription. Requires Mg(2+) as cofactor. Zn(2+) is required as a cofactor.

It catalyses the reaction RNA(n) + a ribonucleoside 5'-triphosphate = RNA(n+1) + diphosphate. In terms of biological role, DNA-dependent RNA polymerase catalyzes the transcription of DNA into RNA using the four ribonucleoside triphosphates as substrates. This Zymomonas mobilis subsp. mobilis (strain ATCC 31821 / ZM4 / CP4) protein is DNA-directed RNA polymerase subunit beta'.